Reading from the N-terminus, the 418-residue chain is 3-isopropylmalate dehydratase large subunit (418 aa).

Residues Cys297, Cys357, and Cys360 each coordinate [4Fe-4S] cluster.

Belongs to the aconitase/IPM isomerase family. LeuC type 2 subfamily. In terms of assembly, heterodimer of LeuC and LeuD. It depends on [4Fe-4S] cluster as a cofactor.

The enzyme catalyses (2R,3S)-3-isopropylmalate = (2S)-2-isopropylmalate. The protein operates within amino-acid biosynthesis; L-leucine biosynthesis; L-leucine from 3-methyl-2-oxobutanoate: step 2/4. In terms of biological role, catalyzes the isomerization between 2-isopropylmalate and 3-isopropylmalate, via the formation of 2-isopropylmaleate. This chain is 3-isopropylmalate dehydratase large subunit, found in Elusimicrobium minutum (strain Pei191).